We begin with the raw amino-acid sequence, 267 residues long: MALNDNPIPKSVPLHPKSGKYFHNLHARDLSNIYQQCYKQIDETINQLVDSTSPSTIGIEEQVADITSTYKLLSTYESESNSFDEHIKDLKKNFKQSSDACPQIDLSTWDKYRTGELTAPKLSELYLNMPTPEPATMVNNTDTLKILKVLPYIWNDPTCVIPDLQNPADEDDLQIEGGKIELTCPITCKPYEAPLISRKCNHVFDRDGIQNYLQGYTTRDCPQAACSQVVSMRDFVRDPIMELRCKIAKMKESQEQDKRSSQAIDVL.

The segment at 169–256 (DEDDLQIEGG…IAKMKESQEQ (88 aa)) adopts an SP-RING-type zinc-finger fold. 4 residues coordinate Zn(2+): cysteine 200, histidine 202, cysteine 221, and cysteine 226.

It belongs to the NSE2 family. Component of the Smc5-Smc6 complex which consists of KRE29, NSE1, NSE2/MMS21, NSE3, NSE4, NSE5, SMC5 and SMC6.

The protein localises to the nucleus. The protein resides in the cytoplasm. It participates in protein modification; protein sumoylation. In terms of biological role, acts as an E3 ligase mediating SUMO/Smt3 attachment to SMC5 and YKU70. Acts in a DNA repair pathway for removal of UV-induced DNA damage that is distinct from classical nucleotide excision repair and in repair of ionizing radiation damage. Functions in homologous recombination repair of DNA double strand breaks and in recovery of stalled replication forks. The sequence is that of E3 SUMO-protein ligase MMS21 (MMS21) from Saccharomyces cerevisiae (strain ATCC 204508 / S288c) (Baker's yeast).